The sequence spans 400 residues: Argininosuccinate synthase (400 aa).

Residues 10-18 and A38 each bind ATP; that span reads AYSGGVDTS. Y89 contacts L-citrulline. G119 contributes to the ATP binding site. The L-aspartate site is built by T121, N125, and D126. N125 contacts L-citrulline. Positions 129, 177, 186, 262, and 274 each coordinate L-citrulline.

This sequence belongs to the argininosuccinate synthase family. Type 1 subfamily. In terms of assembly, homotetramer.

The protein resides in the cytoplasm. The enzyme catalyses L-citrulline + L-aspartate + ATP = 2-(N(omega)-L-arginino)succinate + AMP + diphosphate + H(+). The protein operates within amino-acid biosynthesis; L-arginine biosynthesis; L-arginine from L-ornithine and carbamoyl phosphate: step 2/3. This Trichormus variabilis (strain ATCC 29413 / PCC 7937) (Anabaena variabilis) protein is Argininosuccinate synthase.